The sequence spans 354 residues: NADPH dehydrogenase (354 aa).

FMN is bound by residues Ser-23, Pro-24, Cys-26, Ala-58, and Gln-100. The active-site Proton donor is Tyr-182. FMN is bound by residues Arg-230, Leu-301, Gly-323, and Arg-324.

The protein belongs to the NADH:flavin oxidoreductase/NADH oxidase family. NamA subfamily. Homodimer. Behaves as an active monomer in solution while in the crystal packing assembles following the classical dimeric architecture of other thermophilic-like ene-reductases. FMN is required as a cofactor.

It carries out the reaction A + NADPH + H(+) = AH2 + NADP(+). Its function is as follows. Ene-reductase that catalyzes the stereoselective reduction of activated C-C double bonds. Shows very good activity with 4-ketoisophorone, 2-cyclohexen-1-one and 1-octen-3-one, and low activity with maleimide, 2-methyl-pentenal, 2-methyl-cyclohexen-1-one, 2-cyclopenten-1-one and trans-2-hexen-1-al. Shows the highest catalytic efficiency with ketoisophorone. Exhibits a restricted substrate spectrum with generally lower activities compared to other ene-reductases. This is NADPH dehydrogenase from Chloroflexus aggregans (strain MD-66 / DSM 9485).